The following is a 339-amino-acid chain: Cyclin-Y-like protein 1-A (339 aa).

Positions 1-13 are enriched in polar residues; it reads MGNTVTCCVSPDS. The interval 1 to 42 is disordered; sequence MGNTVTCCVSPDSSPKEGRDREVTESGEPYQAQGEPQDGDVQ. Over residues 14–24 the composition is skewed to basic and acidic residues; that stretch reads SPKEGRDREVT. In terms of domain architecture, Cyclin N-terminal spans 141–263; it reads DIFDEKLHPI…FLELLQFNIN (123 aa).

Belongs to the cyclin family. Cyclin Y subfamily.

This is Cyclin-Y-like protein 1-A (ccnyl1-a) from Xenopus laevis (African clawed frog).